A 432-amino-acid polypeptide reads, in one-letter code: 3-phosphoshikimate 1-carboxyvinyltransferase (432 aa).

3 residues coordinate 3-phosphoshikimate: Lys23, Ser24, and Arg28. Lys23 is a binding site for phosphoenolpyruvate. Phosphoenolpyruvate contacts are provided by Gly99 and Arg127. Positions 172, 173, 174, 200, 317, 341, and 345 each coordinate 3-phosphoshikimate. Phosphoenolpyruvate is bound at residue Gln174. Asp317 (proton acceptor) is an active-site residue. Residues Arg349, Arg391, and Lys416 each contribute to the phosphoenolpyruvate site.

The protein belongs to the EPSP synthase family. Monomer.

The protein localises to the cytoplasm. It carries out the reaction 3-phosphoshikimate + phosphoenolpyruvate = 5-O-(1-carboxyvinyl)-3-phosphoshikimate + phosphate. The protein operates within metabolic intermediate biosynthesis; chorismate biosynthesis; chorismate from D-erythrose 4-phosphate and phosphoenolpyruvate: step 6/7. In terms of biological role, catalyzes the transfer of the enolpyruvyl moiety of phosphoenolpyruvate (PEP) to the 5-hydroxyl of shikimate-3-phosphate (S3P) to produce enolpyruvyl shikimate-3-phosphate and inorganic phosphate. This chain is 3-phosphoshikimate 1-carboxyvinyltransferase, found in Blochmanniella pennsylvanica (strain BPEN).